Reading from the N-terminus, the 238-residue chain is Ribosomal RNA small subunit methyltransferase G (238 aa).

S-adenosyl-L-methionine-binding positions include Gly77, Phe82, 128–129, and Arg146; that span reads AE. A disordered region spans residues 216 to 238; the sequence is KKRQTPKKYPRKPGTPNKEPLLK.

This sequence belongs to the methyltransferase superfamily. RNA methyltransferase RsmG family.

The protein resides in the cytoplasm. In terms of biological role, specifically methylates the N7 position of guanine in position 535 of 16S rRNA. The chain is Ribosomal RNA small subunit methyltransferase G from Macrococcus caseolyticus (strain JCSC5402) (Macrococcoides caseolyticum).